The sequence spans 512 residues: Cytochrome P450 monooxygenase 208 (512 aa).

Residues 4–24 traverse the membrane as a helical segment; it reads LFLVLDTGAAVLLVALLFVVY. Position 438 (C438) interacts with heme.

This sequence belongs to the cytochrome P450 family. Heme is required as a cofactor.

It localises to the membrane. The protein operates within secondary metabolite biosynthesis. Cytochrome P450 monooxygenase that is able to use 7-ethoxycoumarin as a substrate for oxidation. In Postia placenta (strain ATCC 44394 / Madison 698-R) (Brown rot fungus), this protein is Cytochrome P450 monooxygenase 208.